The chain runs to 181 residues: Isopentenyl-diphosphate Delta-isomerase (181 aa).

Positions 29 and 36 each coordinate Mn(2+). The Nudix hydrolase domain occupies 34-167; the sequence is PLHLAFSCYL…GWAISPWAAE (134 aa). The active site involves C71. H73 contacts Mn(2+). Residue E91 coordinates Mg(2+). The Mn(2+) site is built by E118 and E120. The active site involves E120.

Belongs to the IPP isomerase type 1 family. Requires Mg(2+) as cofactor. The cofactor is Mn(2+).

It localises to the cytoplasm. The catalysed reaction is isopentenyl diphosphate = dimethylallyl diphosphate. It participates in isoprenoid biosynthesis; dimethylallyl diphosphate biosynthesis; dimethylallyl diphosphate from isopentenyl diphosphate: step 1/1. In terms of biological role, catalyzes the 1,3-allylic rearrangement of the homoallylic substrate isopentenyl (IPP) to its highly electrophilic allylic isomer, dimethylallyl diphosphate (DMAPP). This chain is Isopentenyl-diphosphate Delta-isomerase, found in Mycolicibacterium vanbaalenii (strain DSM 7251 / JCM 13017 / BCRC 16820 / KCTC 9966 / NRRL B-24157 / PYR-1) (Mycobacterium vanbaalenii).